We begin with the raw amino-acid sequence, 239 residues long: MGRKWNNIKEKKASKDASTSRIYARFGKEIYVAAKQGEPDPESNRALKVVLERAKTYSVPKAIIDRAIDKAKGGSDETFSDLRYEGFGPNGSMIIVDALTNNVNRTAPEVRAAFNKNGGNMGVSGSVAYMFDPTAVFGLEGKSSDEVLEILMEADVDVRDILEEDGAVIVYADAEQFHAVQEALKNGGVSEFTVAELTMLPQNEVTLTEDVQAQFEKLIDALEDLDDVQQVYHNVDLGE.

Belongs to the TACO1 family. YeeN subfamily.

The protein resides in the cytoplasm. This is Probable transcriptional regulatory protein BBR47_14810 from Brevibacillus brevis (strain 47 / JCM 6285 / NBRC 100599).